A 269-amino-acid chain; its full sequence is MEDKNSVIVFKNVSFQYQSDASFTLKDVSFNIPKGQWTSIVGHNGSGKSTIAKLMIGIEKVKSGEIFYNNQAITDDNFEKLRKDIGIVFQNPDNQFVGSIVKYDVAFGLENHAVPHDEMHRRVSEALKQVDMLERADYEPNALSGGQKQRVAIASVLALNPSVIILDEATSMLDPDARQNLLDLVRKVKSEHNITIISITHDLSEAMEADHVIVMNKGTVYKEGTAIEIFDHAEGLTTIGLDLPFPIKINQMLGHQTSFLTYEGLVDQL.

The 235-residue stretch at 8 to 242 (IVFKNVSFQY…AEGLTTIGLD (235 aa)) folds into the ABC transporter domain. 42 to 49 (GHNGSGKS) serves as a coordination point for ATP.

Belongs to the ABC transporter superfamily. Energy-coupling factor EcfA family. Forms a stable energy-coupling factor (ECF) transporter complex composed of 2 membrane-embedded substrate-binding proteins (S component), 2 ATP-binding proteins (A component) and 2 transmembrane proteins (T component).

It is found in the cell membrane. In terms of biological role, ATP-binding (A) component of a common energy-coupling factor (ECF) ABC-transporter complex. Unlike classic ABC transporters this ECF transporter provides the energy necessary to transport a number of different substrates. In Staphylococcus aureus (strain bovine RF122 / ET3-1), this protein is Energy-coupling factor transporter ATP-binding protein EcfA1.